A 354-amino-acid polypeptide reads, in one-letter code: Phenylalanine--tRNA ligase alpha subunit (354 aa).

Glu-279 is a Mg(2+) binding site.

This sequence belongs to the class-II aminoacyl-tRNA synthetase family. Phe-tRNA synthetase alpha subunit type 1 subfamily. In terms of assembly, tetramer of two alpha and two beta subunits. Mg(2+) is required as a cofactor.

Its subcellular location is the cytoplasm. The enzyme catalyses tRNA(Phe) + L-phenylalanine + ATP = L-phenylalanyl-tRNA(Phe) + AMP + diphosphate + H(+). The protein is Phenylalanine--tRNA ligase alpha subunit of Cupriavidus pinatubonensis (strain JMP 134 / LMG 1197) (Cupriavidus necator (strain JMP 134)).